A 464-amino-acid polypeptide reads, in one-letter code: Trigger factor (464 aa).

Residues 162-243 (GDFISIDLSA…VGTVKERELP (82 aa)) enclose the PPIase FKBP-type domain. Residues 435–464 (ELFGNGEAETEEAASTDEAASDSTESEDQK) are disordered.

The protein belongs to the FKBP-type PPIase family. Tig subfamily.

Its subcellular location is the cytoplasm. The enzyme catalyses [protein]-peptidylproline (omega=180) = [protein]-peptidylproline (omega=0). Involved in protein export. Acts as a chaperone by maintaining the newly synthesized protein in an open conformation. Functions as a peptidyl-prolyl cis-trans isomerase. The protein is Trigger factor of Rhodococcus jostii (strain RHA1).